A 173-amino-acid chain; its full sequence is Lipid A deacylase PagL (173 aa).

An N-terminal signal peptide occupies residues 1-23 (MKKLLPLAVLAALSSVHVASAQA). The Periplasmic segment spans residues 25–28 (DVSA). The chain crosses the membrane as a beta stranded span at residues 29-32 (AVGA). A topological domain (periplasmic) is located at residue Thr33. The beta stranded transmembrane segment at 34-49 (GQSGMTYRLGLSWDWD) threads the bilayer. Over 50–56 (KSWWQTS) the chain is Extracellular. Residues 57–71 (TGRLTGYWDAGYTYW) traverse the membrane as a beta stranded segment. Topologically, residues 72 to 73 (EG) are periplasmic. The chain crosses the membrane as a beta stranded span at residues 74–89 (GDEGAGKHSLSFAPVF). Val90 is a topological domain (extracellular). The chain crosses the membrane as a beta stranded span at residues 91–93 (YEF). At 94–95 (AG) the chain is on the periplasmic side. Residues 96–98 (DSI) form a beta stranded membrane-spanning segment. Over 99–100 (KP) the chain is Extracellular. Residues 101–115 (FIEAGIGVAAFSGTR) traverse the membrane as a beta stranded segment. The Periplasmic segment spans residues 116-117 (VG). A beta stranded transmembrane segment spans residues 118 to 128 (DQNLGSSLNFE). At 129-138 (DRIGAGLKFA) the chain is on the extracellular side. A beta stranded membrane pass occupies residues 139–148 (NGQSVGVRAI). Catalysis depends on charge relay system residues His149, Ser151, and Glu163. The Periplasmic segment spans residues 149-173 (HYSNAGLKQPNDGIESYSLFYKIPI).

Belongs to the PagL family. Homodimer.

The protein localises to the cell outer membrane. It carries out the reaction a 3-(acyloxy)acyl derivative of bacterial toxin + H2O = a 3-hydroxyacyl derivative of bacterial toxin + a fatty acid + H(+). With respect to regulation, decreased activity at low temperatures (15 or 21 degrees Celsius). Its function is as follows. Has lipid A 3-O-deacylase activity. Hydrolyzes the ester bond at the 3 position of lipid A, a bioactive component of lipopolysaccharide (LPS), thereby releasing the primary fatty acyl moiety. Lacks fatty acyl chain-length specificity as removes both 3-OH C10 and 3-OH C14 fatty acids from lipid A. The sequence is that of Lipid A deacylase PagL from Pseudomonas aeruginosa (strain ATCC 15692 / DSM 22644 / CIP 104116 / JCM 14847 / LMG 12228 / 1C / PRS 101 / PAO1).